We begin with the raw amino-acid sequence, 270 residues long: Tetraspanin-17 (270 aa).

Residues 1-19 are Cytoplasmic-facing; sequence MPGKHQHFQEPEVGCCGKY. A helical membrane pass occupies residues 20–40; sequence FLFGFNIVFWVLGALFLAIGL. Over 41 to 63 the chain is Extracellular; that stretch reads WAWSEKGVLSNISALTDLGGLDP. Asparagine 51 carries an N-linked (GlcNAc...) asparagine glycan. A helical transmembrane segment spans residues 64–84; sequence VWLFVVVGGVMSVLGFAGCIG. The Cytoplasmic portion of the chain corresponds to 85–94; it reads ALRENTFLLK. The chain crosses the membrane as a helical span at residues 95–115; the sequence is FFSVFLGLIFFLELATGILAF. The Extracellular portion of the chain corresponds to 116-234; it reads VFKDWIRDQL…GQFEKWLQDN (119 aa). Disulfide bonds link cysteine 155–cysteine 223, cysteine 156–cysteine 188, cysteine 172–cysteine 182, and cysteine 189–cysteine 202. Asparagine 171 carries an N-linked (GlcNAc...) asparagine glycan. The chain crosses the membrane as a helical span at residues 235-255; it reads LIVVAGVFVGIALLQIFGICL. The Cytoplasmic segment spans residues 256–270; that stretch reads AQNLVSDIKAVKANW.

The protein belongs to the tetraspanin (TM4SF) family. As to quaternary structure, interacts with ADAM10; the interaction influences ADAM10 substrate specificity, endocytosis and turnover.

It is found in the cell membrane. Functionally, part of TspanC8 subgroup, composed of 6 members that interact with the transmembrane metalloprotease ADAM10. This interaction is required for ADAM10 exit from the endoplasmic reticulum and for enzymatic maturation and trafficking to the cell surface as well as substrate specificity. Different TspanC8/ADAM10 complexes have distinct substrates. Seems to regulate VE-cadherin expression in endothelial cells probably through interaction with ADAM10, promoting leukocyte transmigration. This Bos taurus (Bovine) protein is Tetraspanin-17 (TSPAN17).